Here is a 203-residue protein sequence, read N- to C-terminus: Probable chemoreceptor glutamine deamidase CheD (203 aa).

The protein belongs to the CheD family.

It catalyses the reaction L-glutaminyl-[protein] + H2O = L-glutamyl-[protein] + NH4(+). Its function is as follows. Probably deamidates glutamine residues to glutamate on methyl-accepting chemotaxis receptors (MCPs), playing an important role in chemotaxis. The protein is Probable chemoreceptor glutamine deamidase CheD of Herminiimonas arsenicoxydans.